The chain runs to 324 residues: Spheroidene monooxygenase (324 aa).

The interval 226-324 is disordered; it reads GKDPVGEALT…PGKGGRKENA (99 aa). Composition is skewed to low complexity over residues 248–278 and 287–313; these read PAAAQPAPAAEAPKPAPAPVAEKPALAVEMP and VVEAPKPASAPVASKPMPQGGKPNFKG.

It belongs to the CrtA family. It depends on heme as a cofactor.

It catalyses the reaction spheroidene + 4 reduced [2Fe-2S]-[ferredoxin] + 2 O2 + 4 H(+) = spheroiden-2-one + 4 oxidized [2Fe-2S]-[ferredoxin] + 3 H2O. It carries out the reaction spheroidene + 2 reduced [2Fe-2S]-[ferredoxin] + O2 + 2 H(+) = 2-hydroxyspheroidene + 2 oxidized [2Fe-2S]-[ferredoxin] + H2O. The catalysed reaction is 2-hydroxyspheroidene + 2 reduced [2Fe-2S]-[ferredoxin] + O2 + 2 H(+) = 2,2-dihydroxyspheroidene + 2 oxidized [2Fe-2S]-[ferredoxin] + H2O. The enzyme catalyses 2,2-dihydroxyspheroidene = spheroiden-2-one + H2O. Its pathway is carotenoid biosynthesis; spheroidene biosynthesis. Functionally, involved in the biosynthesis of the carotenoid spheroidene. Catalyzes the introduction of one keto group at the C-2 position of spheroidene. In vitro, can use nonnative substrates and produce oxocarotenoids with a hydroxy and/or a keto group, derived from neurosporene, lycopene, 3,4-didehydrolycopene or 3,4,3',4'-tetradehydrolycopene. The sequence is that of Spheroidene monooxygenase from Cereibacter sphaeroides (strain ATCC 17023 / DSM 158 / JCM 6121 / CCUG 31486 / LMG 2827 / NBRC 12203 / NCIMB 8253 / ATH 2.4.1.) (Rhodobacter sphaeroides).